Reading from the N-terminus, the 60-residue chain is Large ribosomal subunit protein uL30 (60 aa).

Belongs to the universal ribosomal protein uL30 family. Part of the 50S ribosomal subunit.

The polypeptide is Large ribosomal subunit protein uL30 (Baumannia cicadellinicola subsp. Homalodisca coagulata).